The chain runs to 224 residues: MQQPYEYRYPQGTGPSAPPPPPKAGVIVDPKYCSLHPVDLAIVRKVLKITDGNFVITNAEGNLLFKVKDPFFSLHEKRILMDGFGTKVLTLKGKIMTMHDRWLVFRGGSTEEVDLLYTVKRSNMVQITTKLDVFLADNIEQKKCDYRLEGVWLETSCFVYAGDSDIILAQMREKKTMQSVLFGKDNFCLTVNPNVDYAFIASLIVILVEIQISLRKLTKQLLLE.

A disordered region spans residues 1–23 (MQQPYEYRYPQGTGPSAPPPPPK).

It belongs to the LOR family.

Might be related to the phospholipid scramblase and tubby-like superfamily of membrane tethered transcription factors. The chain is Protein LURP-one-related 1 from Arabidopsis thaliana (Mouse-ear cress).